The chain runs to 260 residues: tRNA (guanine-N(1)-)-methyltransferase (260 aa).

S-adenosyl-L-methionine is bound by residues Gly-117 and 137-142 (LGDFVL).

Belongs to the RNA methyltransferase TrmD family. In terms of assembly, homodimer.

The protein resides in the cytoplasm. The enzyme catalyses guanosine(37) in tRNA + S-adenosyl-L-methionine = N(1)-methylguanosine(37) in tRNA + S-adenosyl-L-homocysteine + H(+). Specifically methylates guanosine-37 in various tRNAs. The protein is tRNA (guanine-N(1)-)-methyltransferase of Cupriavidus taiwanensis (strain DSM 17343 / BCRC 17206 / CCUG 44338 / CIP 107171 / LMG 19424 / R1) (Ralstonia taiwanensis (strain LMG 19424)).